Consider the following 302-residue polypeptide: Protein translocase subunit SecF (302 aa).

Transmembrane regions (helical) follow at residues 12–32 (FFIY…FVKG), 138–158 (YAWY…TIRF), 166–186 (AILA…LFGI), 190–210 (LTAI…TIVV), 249–269 (FLVV…FAFG), and 272–292 (VGVI…VIGM).

Belongs to the SecD/SecF family. SecF subfamily. In terms of assembly, forms a complex with SecD. Part of the essential Sec protein translocation apparatus which comprises SecA, SecYEG and auxiliary proteins SecDF. Other proteins may also be involved.

The protein resides in the cell inner membrane. Functionally, part of the Sec protein translocase complex. Interacts with the SecYEG preprotein conducting channel. SecDF uses the proton motive force (PMF) to complete protein translocation after the ATP-dependent function of SecA. In Petrotoga mobilis (strain DSM 10674 / SJ95), this protein is Protein translocase subunit SecF.